Consider the following 127-residue polypeptide: Alkaline proteinase inhibitor (127 aa).

A signal peptide spans 1-26 (MNINYFVRIVPVAVVLLVGISGASMA). A disulfide bond links Cys-53 and Cys-70.

This sequence belongs to the protease inhibitor I38 family.

It is found in the periplasm. In terms of biological role, inhibitor of the alkaline protease. This is Alkaline proteinase inhibitor (inh) from Pseudomonas syringae pv. tomato (strain ATCC BAA-871 / DC3000).